A 468-amino-acid polypeptide reads, in one-letter code: Methionine aminopeptidase 2 (468 aa).

Residues 63-74 show a composition bias toward basic and acidic residues; it reads AAKEATKKDAKG. The disordered stretch occupies residues 63–87; it reads AAKEATKKDAKGGKGKANGSAAATA. Substrate is bound at residue His219. A divalent metal cation contacts are provided by Asp239, Asp250, and His319. Residue His327 participates in substrate binding. A divalent metal cation-binding residues include Glu352 and Glu449.

This sequence belongs to the peptidase M24A family. Methionine aminopeptidase eukaryotic type 2 subfamily. The cofactor is Co(2+). It depends on Zn(2+) as a cofactor. Mn(2+) is required as a cofactor. Fe(2+) serves as cofactor.

It is found in the cytoplasm. The enzyme catalyses Release of N-terminal amino acids, preferentially methionine, from peptides and arylamides.. With respect to regulation, inhibited by the fumagillin analog, TNP-470. Functionally, cotranslationally removes the N-terminal methionine from nascent proteins. The N-terminal methionine is often cleaved when the second residue in the primary sequence is small and uncharged (Met-Ala-, Cys, Gly, Pro, Ser, Thr, or Val). Required for germ cell proliferation and/or differentiation. This chain is Methionine aminopeptidase 2, found in Caenorhabditis elegans.